The primary structure comprises 70 residues: DNA-directed RNA polymerase subunit omega (70 aa).

This sequence belongs to the RNA polymerase subunit omega family. In terms of assembly, the RNAP catalytic core consists of 2 alpha, 1 beta, 1 beta' and 1 omega subunit. When a sigma factor is associated with the core the holoenzyme is formed, which can initiate transcription.

The catalysed reaction is RNA(n) + a ribonucleoside 5'-triphosphate = RNA(n+1) + diphosphate. In terms of biological role, promotes RNA polymerase assembly. Latches the N- and C-terminal regions of the beta' subunit thereby facilitating its interaction with the beta and alpha subunits. This is DNA-directed RNA polymerase subunit omega from Pelobacter propionicus (strain DSM 2379 / NBRC 103807 / OttBd1).